The primary structure comprises 153 residues: Iron-sulfur cluster assembly scaffold protein IscU 1 (153 aa).

Residues C33, C58, H101, and C102 each coordinate [2Fe-2S] cluster.

This sequence belongs to the NifU family. As to quaternary structure, forms a heterotetramer with IscS2.

Its function is as follows. A scaffold on which IscS assembles Fe-S clusters. Subsequently gives the nascent cluster to other proteins. It is likely that Fe-S cluster coordination is flexible as the role of this complex is to build and then hand off Fe-S clusters. In Archaeoglobus fulgidus (strain ATCC 49558 / DSM 4304 / JCM 9628 / NBRC 100126 / VC-16), this protein is Iron-sulfur cluster assembly scaffold protein IscU 1 (iscU1).